Here is a 132-residue protein sequence, read N- to C-terminus: Large-conductance mechanosensitive channel (132 aa).

The next 3 membrane-spanning stretches (helical) occupy residues 14–34 (VVDL…VSSL), 38–58 (IITP…LHFG), and 67–87 (GNFI…FMFV).

It belongs to the MscL family. Homopentamer.

Its subcellular location is the cell membrane. Functionally, channel that opens in response to stretch forces in the membrane lipid bilayer. May participate in the regulation of osmotic pressure changes within the cell. The chain is Large-conductance mechanosensitive channel from Bacillus cereus (strain ATCC 10987 / NRS 248).